Reading from the N-terminus, the 159-residue chain is Vesicle transport protein SFT2A (159 aa).

Residues 1–36 are Cytoplasmic-facing; it reads MEKLRRVLSGQDDEEQGLTAQVLDASSLSFNTRLKW. Phosphoserine is present on serine 9. A helical membrane pass occupies residues 37-57; that stretch reads FVICFVAGIFFSFLGTGLLWL. Topologically, residues 58–62 are lumenal; that stretch reads PNGMK. A helical membrane pass occupies residues 63 to 83; that stretch reads LFAVFYTLGNLAALASTCFLM. The Cytoplasmic portion of the chain corresponds to 84–97; it reads GPVKQLKKMFETTR. A helical transmembrane segment spans residues 98 to 118; that stretch reads LLATIIMLLCLVFTLCAALWW. Residues 119–122 are Lumenal-facing; the sequence is RKKG. A helical transmembrane segment spans residues 123–143; it reads LALLFCILQFLSMTWYSLSYI. Over 144-159 the chain is Cytoplasmic; the sequence is PYARDAVLKCCSSLLG.

It belongs to the SFT2 family.

The protein resides in the membrane. In terms of biological role, may be involved in fusion of retrograde transport vesicles derived from an endocytic compartment with the Golgi complex. The chain is Vesicle transport protein SFT2A from Mus musculus (Mouse).